A 254-amino-acid chain; its full sequence is Thiamine thiazole synthase (254 aa).

Residues Ser-36, Glu-55–Lys-56, Gly-63, Val-127, and His-154–Asp-156 contribute to the NAD(+) site. Residues Asp-156 and His-171 each coordinate Fe cation. Met-219 contacts NAD(+). Arg-229 provides a ligand contact to glycine.

The protein belongs to the THI4 family. As to quaternary structure, homooctamer; tetramer of dimers. Requires Fe(2+) as cofactor.

The catalysed reaction is hydrogen sulfide + glycine + NAD(+) = ADP-5-ethyl-4-methylthiazole-2-carboxylate + nicotinamide + 3 H2O + H(+). It functions in the pathway cofactor biosynthesis; thiamine diphosphate biosynthesis. Functionally, involved in the biosynthesis of the thiazole moiety of thiamine. Catalyzes the conversion of NAD and glycine to adenosine diphosphate 5-(2-hydroxyethyl)-4-methylthiazole-2-carboxylate (ADT), an adenylated thiazole intermediate, using free sulfide as a source of sulfur. The polypeptide is Thiamine thiazole synthase (Methanoculleus marisnigri (strain ATCC 35101 / DSM 1498 / JR1)).